The chain runs to 213 residues: Protein FAM177A1 (213 aa).

Met-1 carries the N-acetylmethionine modification. The residue at position 70 (Ser-70) is a Phosphoserine. Residue Thr-71 is modified to Phosphothreonine. A coiled-coil region spans residues Ile-136–Ile-173. The segment at Glu-147–Gln-175 is disordered. Residues Gln-162 to Gln-175 show a composition bias toward polar residues.

Belongs to the FAM177 family.

The sequence is that of Protein FAM177A1 (FAM177A1) from Homo sapiens (Human).